Consider the following 428-residue polypeptide: Aspartate--tRNA(Asp) ligase (428 aa).

Glutamate 170 lines the L-aspartate pocket. Residues 192 to 195 (QLYK) form an aspartate region. Arginine 213 provides a ligand contact to L-aspartate. ATP-binding positions include 213-215 (RAE) and glutamate 351. The Mg(2+) site is built by glutamate 351 and serine 354. 2 residues coordinate L-aspartate: serine 354 and arginine 358. 399–402 (GFNR) serves as a coordination point for ATP.

It belongs to the class-II aminoacyl-tRNA synthetase family. Type 2 subfamily. In terms of assembly, homodimer. The cofactor is Mg(2+).

Its subcellular location is the cytoplasm. It catalyses the reaction tRNA(Asp) + L-aspartate + ATP = L-aspartyl-tRNA(Asp) + AMP + diphosphate. In terms of biological role, catalyzes the attachment of L-aspartate to tRNA(Asp) in a two-step reaction: L-aspartate is first activated by ATP to form Asp-AMP and then transferred to the acceptor end of tRNA(Asp). This is Aspartate--tRNA(Asp) ligase from Pyrobaculum aerophilum (strain ATCC 51768 / DSM 7523 / JCM 9630 / CIP 104966 / NBRC 100827 / IM2).